A 475-amino-acid chain; its full sequence is Glycogen synthase (475 aa).

K15 lines the ADP-alpha-D-glucose pocket.

Belongs to the glycosyltransferase 1 family. Bacterial/plant glycogen synthase subfamily.

The enzyme catalyses [(1-&gt;4)-alpha-D-glucosyl](n) + ADP-alpha-D-glucose = [(1-&gt;4)-alpha-D-glucosyl](n+1) + ADP + H(+). It functions in the pathway glycan biosynthesis; glycogen biosynthesis. Its function is as follows. Synthesizes alpha-1,4-glucan chains using ADP-glucose. This is Glycogen synthase from Kosmotoga olearia (strain ATCC BAA-1733 / DSM 21960 / TBF 19.5.1).